The following is a 225-amino-acid chain: Cytidylate kinase (225 aa).

11-19 contributes to the ATP binding site; it reads GPAGAGKST.

The protein belongs to the cytidylate kinase family. Type 1 subfamily.

It localises to the cytoplasm. The enzyme catalyses CMP + ATP = CDP + ADP. It catalyses the reaction dCMP + ATP = dCDP + ADP. This is Cytidylate kinase from Shouchella clausii (strain KSM-K16) (Alkalihalobacillus clausii).